The following is a 190-amino-acid chain: Large ribosomal subunit protein uL10 (190 aa).

The protein belongs to the universal ribosomal protein uL10 family. Part of the ribosomal stalk of the 50S ribosomal subunit. The N-terminus interacts with L11 and the large rRNA to form the base of the stalk. The C-terminus forms an elongated spine to which L12 dimers bind in a sequential fashion forming a multimeric L10(L12)X complex.

Forms part of the ribosomal stalk, playing a central role in the interaction of the ribosome with GTP-bound translation factors. This is Large ribosomal subunit protein uL10 from Trichodesmium erythraeum (strain IMS101).